A 264-amino-acid polypeptide reads, in one-letter code: tRNA-uridine aminocarboxypropyltransferase A (264 aa).

The Zn(2+) site is built by Cys25, Cys28, Cys35, and Cys37. The DXTW signature appears at 144-147 (DATW). The disordered stretch occupies residues 245-264 (RPKLLKKRFQNQQPLEQEEE). Residues 254-264 (QNQQPLEQEEE) are compositionally biased toward polar residues.

Belongs to the TDD superfamily. DTWD2 family.

The enzyme catalyses a uridine in tRNA + S-adenosyl-L-methionine = a 3-[(3S)-3-amino-3-carboxypropyl]uridine in tRNA + S-methyl-5'-thioadenosine + H(+). Catalyzes the formation of 3-(3-amino-3-carboxypropyl)uridine (acp3U) at position 20a in the D-loop of several cytoplasmic tRNAs (acp3U(20a)). This Arabidopsis thaliana (Mouse-ear cress) protein is tRNA-uridine aminocarboxypropyltransferase A.